Consider the following 470-residue polypeptide: Cysteine--tRNA ligase (470 aa).

Residue Cys-28 participates in Zn(2+) binding. Residues 30-40 (PTVYNYIHIGN) carry the 'HIGH' region motif. Zn(2+) is bound by residues Cys-211, His-236, and Glu-240. The 'KMSKS' region motif lies at 270-274 (KMSKS). Lys-273 contacts ATP.

This sequence belongs to the class-I aminoacyl-tRNA synthetase family. In terms of assembly, monomer. Zn(2+) serves as cofactor.

The protein resides in the cytoplasm. The enzyme catalyses tRNA(Cys) + L-cysteine + ATP = L-cysteinyl-tRNA(Cys) + AMP + diphosphate. The protein is Cysteine--tRNA ligase of Enterococcus faecalis (strain ATCC 700802 / V583).